Consider the following 379-residue polypeptide: Glucose-1-phosphate adenylyltransferase (379 aa).

Alpha-D-glucose 1-phosphate is bound by residues Gly-164, 179–180 (EK), and Ser-190.

It belongs to the bacterial/plant glucose-1-phosphate adenylyltransferase family. As to quaternary structure, homotetramer.

The enzyme catalyses alpha-D-glucose 1-phosphate + ATP + H(+) = ADP-alpha-D-glucose + diphosphate. The protein operates within glycan biosynthesis; glycogen biosynthesis. In terms of biological role, involved in the biosynthesis of ADP-glucose, a building block required for the elongation reactions to produce glycogen. Catalyzes the reaction between ATP and alpha-D-glucose 1-phosphate (G1P) to produce pyrophosphate and ADP-Glc. In Streptococcus equi subsp. zooepidemicus (strain H70), this protein is Glucose-1-phosphate adenylyltransferase.